Reading from the N-terminus, the 847-residue chain is Putative membrane protein SCO5905 (847 aa).

Helical transmembrane passes span 18 to 38, 187 to 207, 215 to 235, 248 to 268, 302 to 322, 326 to 346, 381 to 401, 539 to 559, 562 to 582, 600 to 620, 643 to 663, and 672 to 692; these read AVVV…APAL, GGDK…LLAI, LVPL…GAIL, ASIM…IITA, IVLA…GFGP, LGVA…VLLL, VKVA…LLGY, DTTL…VLLL, LLAP…TLGA, VTAY…IFIM, TGGV…VLMT, and FGFA…PLLV. Residues 708–729 form a disordered region; sequence RPGTPQTPSTPTSEPPSADAPA. A run of 3 helical transmembrane segments spans residues 744–764, 778–798, and 808–828; these read FTWI…GMYL, FGTL…LVAI, and TIFA…EIWA.

This sequence belongs to the resistance-nodulation-cell division (RND) (TC 2.A.6) family. MmpL subfamily.

It localises to the cell membrane. This Streptomyces coelicolor (strain ATCC BAA-471 / A3(2) / M145) protein is Putative membrane protein SCO5905.